The following is a 280-amino-acid chain: NAD(P)H-quinone oxidoreductase subunit K, chloroplastic (280 aa).

Residues Cys-65, Cys-66, Cys-130, and Cys-161 each contribute to the [4Fe-4S] cluster site. Positions 257–280 (LLKDWKQSNQKQEQNVKMMKEEEA) are disordered.

The protein belongs to the complex I 20 kDa subunit family. NDH is composed of at least 16 different subunits, 5 of which are encoded in the nucleus. The cofactor is [4Fe-4S] cluster.

The protein resides in the plastid. The protein localises to the chloroplast thylakoid membrane. The enzyme catalyses a plastoquinone + NADH + (n+1) H(+)(in) = a plastoquinol + NAD(+) + n H(+)(out). It catalyses the reaction a plastoquinone + NADPH + (n+1) H(+)(in) = a plastoquinol + NADP(+) + n H(+)(out). Its function is as follows. NDH shuttles electrons from NAD(P)H:plastoquinone, via FMN and iron-sulfur (Fe-S) centers, to quinones in the photosynthetic chain and possibly in a chloroplast respiratory chain. The immediate electron acceptor for the enzyme in this species is believed to be plastoquinone. Couples the redox reaction to proton translocation, and thus conserves the redox energy in a proton gradient. This Staurastrum punctulatum (Green alga) protein is NAD(P)H-quinone oxidoreductase subunit K, chloroplastic.